The chain runs to 143 residues: Large ribosomal subunit protein uL11 (143 aa).

This sequence belongs to the universal ribosomal protein uL11 family. Part of the ribosomal stalk of the 50S ribosomal subunit. Interacts with L10 and the large rRNA to form the base of the stalk. L10 forms an elongated spine to which L12 dimers bind in a sequential fashion forming a multimeric L10(L12)X complex. Post-translationally, one or more lysine residues are methylated.

Its function is as follows. Forms part of the ribosomal stalk which helps the ribosome interact with GTP-bound translation factors. In Nitrosomonas eutropha (strain DSM 101675 / C91 / Nm57), this protein is Large ribosomal subunit protein uL11.